The sequence spans 610 residues: Probable galacturonosyltransferase 5 (610 aa).

Residues 1–6 (MNQVRR) are Cytoplasmic-facing. A helical; Signal-anchor for type II membrane protein membrane pass occupies residues 7-27 (WQRILILSLLLLSVLAPIVFV). Residues 28–610 (SNRLKSITSV…PHLQRCNIHD (583 aa)) lie on the Lumenal side of the membrane. Positions 86-101 (LSNSSDKSNDTVQSNE) are enriched in polar residues. The disordered stretch occupies residues 86–170 (LSNSSDKSND…KNTRVQLERA (85 aa)). N-linked (GlcNAc...) asparagine glycosylation is found at Asn88 and Asn94. Over residues 110 to 123 (EVDKGNNHKPKEEQ) the composition is skewed to basic and acidic residues. Polar residues predominate over residues 124–135 (AVSQKTTVSSNA). Over residues 139–170 (ISARDIQLNHKTEFRPPSSKSEKNTRVQLERA) the composition is skewed to basic and acidic residues. Residues Asn196, Asn338, Asn401, and Asn475 are each glycosylated (N-linked (GlcNAc...) asparagine).

It belongs to the glycosyltransferase 8 family. In terms of tissue distribution, expressed in roots, inflorescences, siliques, leaves and stems.

The protein localises to the golgi apparatus membrane. It participates in glycan metabolism; pectin biosynthesis. Functionally, may be involved in pectin and/or xylans biosynthesis in cell walls. This Arabidopsis thaliana (Mouse-ear cress) protein is Probable galacturonosyltransferase 5 (GAUT5).